A 1197-amino-acid chain; its full sequence is Probable DNA polymerase (1197 aa).

Belongs to the DNA polymerase type-B family.

The protein resides in the mitochondrion. The catalysed reaction is DNA(n) + a 2'-deoxyribonucleoside 5'-triphosphate = DNA(n+1) + diphosphate. This chain is Probable DNA polymerase, found in Podospora anserina (Pleurage anserina).